The chain runs to 441 residues: MSQRSSELISDSWKGSSSEELFERAKIVSPGGVHSPVRSFRSVGGTPVFFVSANGATLTDVSGKEYVDFCLSFGPLILGHRDPEVEEVVRETAGLAWSFGTAEPYSLELAEFITNRIPWAEKVRFVNSGTEAVMSALRVTRAATGREKIFKFDGCYHGHLDALLVKAGSGLAGESSSDSAGISSTAIANTLVLPLDDEMAVQKLFESEGKNIAALIIEPLPANYGLLVQRKEFLLKIVEIAKKYGTLVVFDEVISGFRTGFQGMSGLLGIRPDLVTYGKIIGGGFPVGCYAGRRDLLDLVAPSGPVYQAGTLSANPFGMRAGLATLKKAERDSIYSVLEVRTKTFADEMVKLLNGKTDQEWEAVTHSSLFWFRKKTQQAVRRIDQIPEGHKEGFAEVFHVLLKNGIYLAPSGYEVGFLSWAHNDSVIAKVLEIADKAFKEL.

Residue lysine 279 is modified to N6-(pyridoxal phosphate)lysine.

The protein belongs to the class-III pyridoxal-phosphate-dependent aminotransferase family. HemL subfamily. As to quaternary structure, homodimer. Pyridoxal 5'-phosphate is required as a cofactor.

It is found in the cytoplasm. The catalysed reaction is (S)-4-amino-5-oxopentanoate = 5-aminolevulinate. Its pathway is porphyrin-containing compound metabolism; protoporphyrin-IX biosynthesis; 5-aminolevulinate from L-glutamyl-tRNA(Glu): step 2/2. In Leptospira borgpetersenii serovar Hardjo-bovis (strain JB197), this protein is Glutamate-1-semialdehyde 2,1-aminomutase.